The following is a 377-amino-acid chain: Putative holocytochrome-c synthase (377 aa).

Disordered stretches follow at residues 1–29 (MTSSETTTDHPRTGKCPIDHSKFARSNEA) and 111–136 (QNSEATPAVQPPATCPMSNSNQKPAG). The segment covering 7 to 22 (TTDHPRTGKCPIDHSK) has biased composition (basic and acidic residues). 2 HRM repeats span residues 114–119 (EATPAV) and 124–129 (TCPMSN).

This sequence belongs to the cytochrome c-type heme lyase family.

The protein localises to the mitochondrion inner membrane. It localises to the mitochondrion intermembrane space. It catalyses the reaction holo-[cytochrome c] = apo-[cytochrome c] + heme b. Lyase that catalyzes the covalent linking of the heme group to the cytochrome C apoprotein to produce the mature functional cytochrome. This is Putative holocytochrome-c synthase from Schizosaccharomyces pombe (strain 972 / ATCC 24843) (Fission yeast).